The primary structure comprises 172 residues: Small ribosomal subunit protein uS5 (172 aa).

Residues 17–80 (LREKMISVNR…EQARRNMFKV (64 aa)) form the S5 DRBM domain.

Belongs to the universal ribosomal protein uS5 family. In terms of assembly, part of the 30S ribosomal subunit. Contacts proteins S4 and S8.

In terms of biological role, with S4 and S12 plays an important role in translational accuracy. Located at the back of the 30S subunit body where it stabilizes the conformation of the head with respect to the body. This Paraburkholderia xenovorans (strain LB400) protein is Small ribosomal subunit protein uS5.